The primary structure comprises 62 residues: Beta-defensin 33 (62 aa).

A signal peptide spans 1-20 (MRLLFLLFILLVCLAQTTSG). Disulfide bonds link C30–C59, C37–C52, and C45–C60.

Belongs to the beta-defensin family.

Its subcellular location is the secreted. In terms of biological role, has antibacterial activity. The polypeptide is Beta-defensin 33 (Defb33) (Mus musculus (Mouse)).